Consider the following 170-residue polypeptide: ATP synthase subunit b (170 aa).

Residues 11 to 31 (AFTFGDAFFTLFAFAILLVLI) traverse the membrane as a helical segment.

It belongs to the ATPase B chain family. As to quaternary structure, F-type ATPases have 2 components, F(1) - the catalytic core - and F(0) - the membrane proton channel. F(1) has five subunits: alpha(3), beta(3), gamma(1), delta(1), epsilon(1). F(0) has three main subunits: a(1), b(2) and c(10-14). The alpha and beta chains form an alternating ring which encloses part of the gamma chain. F(1) is attached to F(0) by a central stalk formed by the gamma and epsilon chains, while a peripheral stalk is formed by the delta and b chains.

The protein resides in the cell membrane. Functionally, f(1)F(0) ATP synthase produces ATP from ADP in the presence of a proton or sodium gradient. F-type ATPases consist of two structural domains, F(1) containing the extramembraneous catalytic core and F(0) containing the membrane proton channel, linked together by a central stalk and a peripheral stalk. During catalysis, ATP synthesis in the catalytic domain of F(1) is coupled via a rotary mechanism of the central stalk subunits to proton translocation. In terms of biological role, component of the F(0) channel, it forms part of the peripheral stalk, linking F(1) to F(0). The chain is ATP synthase subunit b from Listeria welshimeri serovar 6b (strain ATCC 35897 / DSM 20650 / CCUG 15529 / CIP 8149 / NCTC 11857 / SLCC 5334 / V8).